The chain runs to 1227 residues: Anion exchange protein 3 (1227 aa).

Residues 1-11 show a composition bias toward pro residues; the sequence is MANGVIPPPGG. 3 disordered regions span residues 1 to 256, 286 to 312, and 428 to 497; these read MANG…DEAE, KPSR…KKKK, and NDDK…GDGH. The Cytoplasmic portion of the chain corresponds to 1–707; sequence MANGVIPPPG…DLRDALHSQC (707 aa). Positions 58-75 are enriched in basic and acidic residues; that stretch reads DPEKPSRSYSERDFEFHR. 2 stretches are compositionally biased toward basic residues: residues 76 to 97 and 104 to 113; these read HTSH…KLRR and RHTRRKRKKE. Residues 134 to 152 are compositionally biased toward acidic residues; the sequence is AEEEEEEEEEEEGESEAEP. Residues Ser-167, Ser-170, Ser-175, and Ser-198 each carry the phosphoserine modification. Over residues 194-215 the composition is skewed to low complexity; the sequence is QSDQSPQRSGSSPSPRARASRI. Arg-294 is modified (omega-N-methylarginine). Residues 435–448 show a composition bias toward low complexity; the sequence is FFPRNPSSSSVNSV. Basic and acidic residues predominate over residues 480–497; it reads HDPDAKEKPLHMPGGDGH. The next 4 helical transmembrane spans lie at 708–730, 736–773, 793–815, and 825–846; these read VAAV…GLLG, LMGV…LLVF, VWVG…SFLV, and IFAF…YKVF. The membrane (anion exchange) stretch occupies residues 708–1227; it reads VAAVLFIYFA…DEYNELHMPV (520 aa). N-linked (GlcNAc...) asparagine glycosylation occurs at Asn-868. Residues 888-905 traverse the membrane as a helical segment; it reads ALLSLILMLGTFLIAFFL. Residues 906–920 lie on the Cytoplasmic side of the membrane; the sequence is RKFRNSRFLGGKARR. 5 consecutive transmembrane segments (helical) span residues 921–941, 975–997, 1023–1044, 1078–1123, and 1150–1186; these read IIGD…DYSI, PFPP…LIFM, LLLI…LTAA, VTGV…IQLS, and MHLF…TVPL. The S-palmitoyl cysteine moiety is linked to residue Cys-1160.

The protein belongs to the anion exchanger (TC 2.A.31) family. As to expression, expressed in the brain.

Its subcellular location is the cell membrane. The enzyme catalyses hydrogencarbonate(in) + chloride(out) = hydrogencarbonate(out) + chloride(in). With respect to regulation, inhibited by 4,4'-diisothiocyanatostilbene-2,2'-disulfonic acid (DIDS). In terms of biological role, sodium-independent anion exchanger which mediates the electroneutral exchange of chloride for bicarbonate ions across the cell membrane. May be involved in the regulation of intracellular pH, and the modulation of cardiac action potential. In Mus musculus (Mouse), this protein is Anion exchange protein 3 (Slc4a3).